The sequence spans 24 residues: 12 kDa protein (24 aa).

This is 12 kDa protein from Mycolicibacterium smegmatis (Mycobacterium smegmatis).